Reading from the N-terminus, the 184-residue chain is MKNVTDSFVSLGDWPYAGSFAFNTDILATNPINLSVVLGVLIFFGKGVLSDLLDNRKQKILSSIRNSEELRAKAIEQLEKARARLRKVEIEADKFRVNGYSEIEREKGNLINSTYENLQRLENYKNEAIQFEQQRTINQVRQRVFQQALQEALETLNSCLNSELHLRTISANIVMLGVMKEITD.

Residues 27-49 (LATNPINLSVVLGVLIFFGKGVL) form a helical membrane-spanning segment.

It belongs to the ATPase B chain family. As to quaternary structure, F-type ATPases have 2 components, F(1) - the catalytic core - and F(0) - the membrane proton channel. F(1) has five subunits: alpha(3), beta(3), gamma(1), delta(1), epsilon(1). F(0) has four main subunits: a(1), b(1), b'(1) and c(10-14). The alpha and beta chains form an alternating ring which encloses part of the gamma chain. F(1) is attached to F(0) by a central stalk formed by the gamma and epsilon chains, while a peripheral stalk is formed by the delta, b and b' chains.

The protein resides in the plastid. It localises to the chloroplast thylakoid membrane. Its function is as follows. F(1)F(0) ATP synthase produces ATP from ADP in the presence of a proton or sodium gradient. F-type ATPases consist of two structural domains, F(1) containing the extramembraneous catalytic core and F(0) containing the membrane proton channel, linked together by a central stalk and a peripheral stalk. During catalysis, ATP synthesis in the catalytic domain of F(1) is coupled via a rotary mechanism of the central stalk subunits to proton translocation. In terms of biological role, component of the F(0) channel, it forms part of the peripheral stalk, linking F(1) to F(0). In Ceratophyllum demersum (Rigid hornwort), this protein is ATP synthase subunit b, chloroplastic.